Consider the following 349-residue polypeptide: Small ribosomal subunit biogenesis GTPase RsgA (349 aa).

The interval 1 to 38 (MSKNKLSKGQERRVQANHQRRLKRTDNKPELDDSQLGE) is disordered. The 171-residue stretch at 102–272 (TSVLNRPDIY…VIDSPGVREF (171 aa)) folds into the CP-type G domain. Residues 158 to 161 (NKID) and 212 to 220 (GQSGVGKSS) each bind GTP. Cys-296, Cys-301, His-303, and Cys-309 together coordinate Zn(2+).

This sequence belongs to the TRAFAC class YlqF/YawG GTPase family. RsgA subfamily. In terms of assembly, monomer. Associates with 30S ribosomal subunit, binds 16S rRNA. Zn(2+) is required as a cofactor.

The protein localises to the cytoplasm. Its function is as follows. One of several proteins that assist in the late maturation steps of the functional core of the 30S ribosomal subunit. Helps release RbfA from mature subunits. May play a role in the assembly of ribosomal proteins into the subunit. Circularly permuted GTPase that catalyzes slow GTP hydrolysis, GTPase activity is stimulated by the 30S ribosomal subunit. This Serratia proteamaculans (strain 568) protein is Small ribosomal subunit biogenesis GTPase RsgA.